The chain runs to 327 residues: Thiamine-binding periplasmic protein (327 aa).

The N-terminal stretch at 1-18 (MLKKYLPLLLLCAAPAFA) is a signal peptide. Residues 59–60 (DG), 161–162 (ST), W197, and 215–218 (YTTS) each bind thiamine.

Belongs to the bacterial solute-binding protein 1 family. As to quaternary structure, the complex is composed of two ATP-binding proteins (ThiQ), two transmembrane proteins (ThiP) and a solute-binding protein (ThiB).

It localises to the periplasm. In terms of biological role, part of the ABC transporter complex ThiBPQ involved in thiamine import. Is also involved in thiamine pyrophosphate transport. This is Thiamine-binding periplasmic protein from Salmonella typhimurium (strain LT2 / SGSC1412 / ATCC 700720).